The chain runs to 197 residues: Amino-terminal enhancer of split (197 aa).

Over residues 1–15 (MMFPQSSSRHSGSSH) the composition is skewed to low complexity. Disordered stretches follow at residues 1–20 (MMFP…PQQL) and 169–197 (LGSQ…DKSD). The CCN domain stretch occupies residues 166–197 (LSALGSQGHLPKEDKNGHEGDRRPDDDGDKSD). The span at 175-197 (LPKEDKNGHEGDRRPDDDGDKSD) shows a compositional bias: basic and acidic residues.

This sequence belongs to the WD repeat Groucho/TLE family. In terms of assembly, monomer. Post-translationally, ubiquitinated by XIAP/BIRC4. Predominantly expressed in brain, testis and ovary. Ubiquitously expressed in the developing embryo. Present in unfertilized and fertilized eggs.

It is found in the nucleus. Its function is as follows. May act as a transcriptional corepressor. Has a possible role in the negative regulation of proteins containing WD-40 repeats. May be required for the initiation and maintenance of the differentiated state. In Xenopus laevis (African clawed frog), this protein is Amino-terminal enhancer of split (aes).